We begin with the raw amino-acid sequence, 538 residues long: Mitochondria-eating protein (538 aa).

Residues 1–273 are interaction with YWHAG/14-3-3 protein gamma; it reads MAENLKRLVS…PRSRSCSRSR (273 aa). S85 bears the Phosphoserine mark. The interval 92–137 is disordered; sequence GKPVDSKVPSLQNTFDRERRKDPSPRDRDMQQLDSNLNSTRSQLNQ. Over residues 106–122 the composition is skewed to basic and acidic residues; the sequence is FDRERRKDPSPRDRDMQ. Coiled-coil stretches lie at residues 118–186 and 220–256; these read DRDM…ARHR and QRDT…RSSR. Residues 123–137 are compositionally biased toward polar residues; that stretch reads QLDSNLNSTRSQLNQ. Phosphoserine occurs at positions 156 and 159. Disordered regions lie at residues 174–227 and 247–292; these read LKTL…EVTS and KSAL…NRSK. Composition is skewed to basic and acidic residues over residues 181-209 and 216-227; these read EDAR…RRCE and RNADQRDTEVTS. A compositionally biased stretch (low complexity) spans 253-278; sequence RSSRSRSPSPAPRSRSCSRSRSASPS. Phosphoserine is present on residues S285, S287, and S509.

Belongs to the MIEAP family. Interacts (via coiled-coil domains) with BNIP3L (via BH3 domain). Interacts (via coiled-coil domains) with BNIP3 (via BH3 domain). Interacts with YWHAG/14-3-3 protein gamma; a protein that also plays a role in MALM.

It localises to the cytoplasm. Its subcellular location is the cytosol. It is found in the mitochondrion outer membrane. The protein resides in the mitochondrion matrix. Key regulator of mitochondrial quality that mediates the repairing or degradation of unhealthy mitochondria in response to mitochondrial damage. Mediator of mitochondrial protein catabolic process (also named MALM) by mediating the degradation of damaged proteins inside mitochondria by promoting the accumulation in the mitochondrial matrix of hydrolases that are characteristic of the lysosomal lumen. Also involved in mitochondrion degradation of damaged mitochondria by promoting the formation of vacuole-like structures (named MIV), which engulf and degrade unhealthy mitochondria by accumulating lysosomes. The physical interaction of SPATA18/MIEAP, BNIP3 and BNIP3L/NIX at the mitochondrial outer membrane regulates the opening of a pore in the mitochondrial double membrane in order to mediate the translocation of lysosomal proteins from the cytoplasm to the mitochondrial matrix. Binds cardiolipin. May form molecular condensates (non-membrane-bounded organelles) within mitochondria that compartmentalize and promote cardiolipin metabolism. This chain is Mitochondria-eating protein (SPATA18), found in Macaca fascicularis (Crab-eating macaque).